Consider the following 1011-residue polypeptide: Protein translocase subunit SecA, chloroplastic (1011 aa).

A compositionally biased stretch (polar residues) spans 1–17 (MATSSLCSSFTSQTCNP). The tract at residues 1 to 22 (MATSSLCSSFTSQTCNPHSRPH) is disordered. A chloroplast-targeting transit peptide spans 1–59 (MATSSLCSSFTSQTCNPHSRPHRKTLTLPGSVFLCRQFHLNSPSVSKTRRIRTRQSGPV). Residue 164–171 (MRTGEGKT) coordinates ATP. Residues 976 to 1011 (QDKMENQKSGKRNARPPTDTNPDPVGTVEPSTSASS) are disordered.

It belongs to the SecA family.

The protein resides in the plastid. It is found in the chloroplast stroma. The protein localises to the chloroplast thylakoid membrane. The catalysed reaction is ATP + H2O + chloroplast-proteinSide 1 = ADP + phosphate + chloroplast-proteinSide 2.. Functionally, has a central role in coupling the hydrolysis of ATP to the transfer of proteins across the thylakoid membrane. Facilitates the transport of precursor proteins from the chloroplast stroma to thylakoid lumen. In Pisum sativum (Garden pea), this protein is Protein translocase subunit SecA, chloroplastic.